The sequence spans 85 residues: MAERERDREQHERLFKAASNPLRKKMAEKIGNRGITREELKKELGDVSDFEFKFNLDYLIAEGFVVEKDGKLYLTEDGVDLAYGG.

To A.fulgidus AF_0255 and AF_1363.

This is an uncharacterized protein from Archaeoglobus fulgidus (strain ATCC 49558 / DSM 4304 / JCM 9628 / NBRC 100126 / VC-16).